A 425-amino-acid chain; its full sequence is Serine--tRNA ligase (425 aa).

Position 230–232 (230–232 (TAE)) interacts with L-serine. 261 to 263 (RSE) is a binding site for ATP. E284 serves as a coordination point for L-serine. Position 348-351 (348-351 (EISS)) interacts with ATP. L-serine is bound at residue S384.

It belongs to the class-II aminoacyl-tRNA synthetase family. Type-1 seryl-tRNA synthetase subfamily. As to quaternary structure, homodimer. The tRNA molecule binds across the dimer.

It is found in the cytoplasm. It carries out the reaction tRNA(Ser) + L-serine + ATP = L-seryl-tRNA(Ser) + AMP + diphosphate + H(+). It catalyses the reaction tRNA(Sec) + L-serine + ATP = L-seryl-tRNA(Sec) + AMP + diphosphate + H(+). The protein operates within aminoacyl-tRNA biosynthesis; selenocysteinyl-tRNA(Sec) biosynthesis; L-seryl-tRNA(Sec) from L-serine and tRNA(Sec): step 1/1. Catalyzes the attachment of serine to tRNA(Ser). Is also able to aminoacylate tRNA(Sec) with serine, to form the misacylated tRNA L-seryl-tRNA(Sec), which will be further converted into selenocysteinyl-tRNA(Sec). This Streptococcus agalactiae serotype Ia (strain ATCC 27591 / A909 / CDC SS700) protein is Serine--tRNA ligase.